We begin with the raw amino-acid sequence, 153 residues long: MKCPFCNSADTRVKNSRHSDDNMSVRRRRLCEVCNSRFTTLEELLLKPIMVLKKDGRMEPFDKQKLLTSIMLATNKRPVTHAQINMVLSKILYKFESVKEDVIPARVIGEIVKNNLLVLDKVAYIRFVSVYMDFSDADDFCSLVEKIKEGSDK.

The tract at residues 1–20 is disordered; it reads MKCPFCNSADTRVKNSRHSD. The segment at 3 to 34 is a zinc-finger region; the sequence is CPFCNSADTRVKNSRHSDDNMSVRRRRLCEVC. Residues 11-20 show a composition bias toward basic and acidic residues; sequence TRVKNSRHSD. The region spanning 49 to 139 is the ATP-cone domain; the sequence is IMVLKKDGRM…VYMDFSDADD (91 aa).

It belongs to the NrdR family. Zn(2+) serves as cofactor.

Negatively regulates transcription of bacterial ribonucleotide reductase nrd genes and operons by binding to NrdR-boxes. The protein is Transcriptional repressor NrdR of Anaplasma phagocytophilum (strain HZ).